The sequence spans 212 residues: Methylthioribulose-1-phosphate dehydratase (212 aa).

The Zn(2+) site is built by H99 and H101.

The protein belongs to the aldolase class II family. MtnB subfamily. Homotetramer. It depends on Zn(2+) as a cofactor.

It catalyses the reaction 5-(methylsulfanyl)-D-ribulose 1-phosphate = 5-methylsulfanyl-2,3-dioxopentyl phosphate + H2O. Its pathway is amino-acid biosynthesis; L-methionine biosynthesis via salvage pathway; L-methionine from S-methyl-5-thio-alpha-D-ribose 1-phosphate: step 2/6. Catalyzes the dehydration of methylthioribulose-1-phosphate (MTRu-1-P) into 2,3-diketo-5-methylthiopentyl-1-phosphate (DK-MTP-1-P). In Bacillus pumilus (strain SAFR-032), this protein is Methylthioribulose-1-phosphate dehydratase.